Consider the following 434-residue polypeptide: Methylenetetrahydrofolate--tRNA-(uracil-5-)-methyltransferase TrmFO (434 aa).

9–14 (GAGLAG) provides a ligand contact to FAD.

Belongs to the MnmG family. TrmFO subfamily. Requires FAD as cofactor.

It is found in the cytoplasm. It carries out the reaction uridine(54) in tRNA + (6R)-5,10-methylene-5,6,7,8-tetrahydrofolate + NADH + H(+) = 5-methyluridine(54) in tRNA + (6S)-5,6,7,8-tetrahydrofolate + NAD(+). The enzyme catalyses uridine(54) in tRNA + (6R)-5,10-methylene-5,6,7,8-tetrahydrofolate + NADPH + H(+) = 5-methyluridine(54) in tRNA + (6S)-5,6,7,8-tetrahydrofolate + NADP(+). In terms of biological role, catalyzes the folate-dependent formation of 5-methyl-uridine at position 54 (M-5-U54) in all tRNAs. The polypeptide is Methylenetetrahydrofolate--tRNA-(uracil-5-)-methyltransferase TrmFO (Fusobacterium nucleatum subsp. nucleatum (strain ATCC 25586 / DSM 15643 / BCRC 10681 / CIP 101130 / JCM 8532 / KCTC 2640 / LMG 13131 / VPI 4355)).